The primary structure comprises 91 residues: Non-specific lipid-transfer protein 1 (91 aa).

4 disulfides stabilise this stretch: C3–C50, C13–C27, C28–C73, and C48–C87.

This sequence belongs to the plant LTP family.

Its function is as follows. Plant non-specific lipid-transfer proteins transfer phospholipids as well as galactolipids across membranes. May play a role in wax or cutin deposition in the cell walls of expanding epidermal cells and certain secretory tissues. The polypeptide is Non-specific lipid-transfer protein 1 (Prunus persica (Peach)).